Reading from the N-terminus, the 254-residue chain is Countin-2 (254 aa).

The signal sequence occupies residues 1-19 (MMIKYITIAILFIASLVKA). A Saposin B-type domain is found at 22 to 107 (QFSLCPTCVD…EELTVCPKNQ (86 aa)). Intrachain disulfides connect Cys-26–Cys-103, Cys-29–Cys-97, and Cys-56–Cys-68. N-linked (GlcNAc...) asparagine glycans are attached at residues Asn-110 and Asn-219. The tract at residues 231–254 (QMTGTGSGSGSGSGSSSGAAYLRY) is disordered. Gly residues predominate over residues 233–245 (TGTGSGSGSGSGS).

Belongs to the countin family.

It localises to the secreted. In terms of biological role, cell-counting factor that limits the minimum size of the multicellular structure. May up-regulate the expression of both gp24 and gp80, which mediate cell adhesion. The chain is Countin-2 (ctnB) from Dictyostelium discoideum (Social amoeba).